A 344-amino-acid polypeptide reads, in one-letter code: Envelope glycoprotein M (344 aa).

Topologically, residues 1 to 12 are intravirion; it reads MASSRVDTINLR. The helical transmembrane segment at 13–33 threads the bilayer; it reads IWLVSIICAALSFINVTVHLI. Over 34 to 76 the chain is Virion surface; sequence AINFPNLGFPCAYFEINDLKAVNLSANNEIYQMTHQLYINPVQ. A helical membrane pass occupies residues 77-97; that stretch reads IICYVLIMAILFLLIIIYYIV. The Intravirion segment spans residues 98 to 125; sequence CCAKVFSSNKTSNVNQTTRDITWMGDTS. Residues 126–146 form a helical membrane-spanning segment; it reads SCFQFILIMDTFQLFVTALSF. A topological domain (virion surface) is located at residue arginine 147. Residues 148 to 168 traverse the membrane as a helical segment; the sequence is LVALGAFAYSIFFVCFTTFNV. Residues 169–203 lie on the Intravirion side of the membrane; it reads TLITQFQSADKSFFAFQKIHPNLKGTVQFKTVVIN. A helical transmembrane segment spans residues 204–224; the sequence is LSELMLGYSTMFLGITTCLGV. Over 225–238 the chain is Virion surface; that stretch reads GNSIYIRSITVAFS. A helical transmembrane segment spans residues 239–259; that stretch reads SINTFLVMACIYSIVIEAVLV. Topologically, residues 260–263 are intravirion; that stretch reads RYVK. A helical transmembrane segment spans residues 264-284; it reads PLFGYYVGMFCGAVGLSFPIL. Residues 285–293 lie on the Virion surface side of the membrane; it reads QYETFFESE. Residues 294 to 314 traverse the membrane as a helical segment; it reads WSTGLIINLSVVAIISIGFII. Topologically, residues 315–344 are intravirion; that stretch reads CRLVRYLVKKKRRYKQLLNAESSSLMDENE.

Belongs to the herpesviridae glycoprotein M family. In terms of assembly, interacts (via N-terminus) with gN (via N-terminus). The gM-gN heterodimer forms the gCII complex.

The protein resides in the virion membrane. Its subcellular location is the host Golgi apparatus. It is found in the host trans-Golgi network. The protein localises to the host endosome membrane. It localises to the host nucleus inner membrane. In terms of biological role, envelope glycoprotein important for virion assembly and egress. Plays a role in the correct incorporation of gH-gL into virion membrane. Directs the glycoprotein N (gN) to the host trans-Golgi network. This Homo sapiens (Human) protein is Envelope glycoprotein M.